The chain runs to 111 residues: Large ribosomal subunit protein uL22 (111 aa).

The protein belongs to the universal ribosomal protein uL22 family. As to quaternary structure, part of the 50S ribosomal subunit.

In terms of biological role, this protein binds specifically to 23S rRNA; its binding is stimulated by other ribosomal proteins, e.g. L4, L17, and L20. It is important during the early stages of 50S assembly. It makes multiple contacts with different domains of the 23S rRNA in the assembled 50S subunit and ribosome. The globular domain of the protein is located near the polypeptide exit tunnel on the outside of the subunit, while an extended beta-hairpin is found that lines the wall of the exit tunnel in the center of the 70S ribosome. The chain is Large ribosomal subunit protein uL22 from Pelobacter propionicus (strain DSM 2379 / NBRC 103807 / OttBd1).